The primary structure comprises 465 residues: ATP synthase subunit beta (465 aa).

Residue 149 to 156 coordinates ATP; it reads GGAGVGKT.

Belongs to the ATPase alpha/beta chains family. In terms of assembly, F-type ATPases have 2 components, CF(1) - the catalytic core - and CF(0) - the membrane proton channel. CF(1) has five subunits: alpha(3), beta(3), gamma(1), delta(1), epsilon(1). CF(0) has three main subunits: a(1), b(2) and c(9-12). The alpha and beta chains form an alternating ring which encloses part of the gamma chain. CF(1) is attached to CF(0) by a central stalk formed by the gamma and epsilon chains, while a peripheral stalk is formed by the delta and b chains.

It is found in the cell inner membrane. The catalysed reaction is ATP + H2O + 4 H(+)(in) = ADP + phosphate + 5 H(+)(out). Produces ATP from ADP in the presence of a proton gradient across the membrane. The catalytic sites are hosted primarily by the beta subunits. The protein is ATP synthase subunit beta of Dictyoglomus turgidum (strain DSM 6724 / Z-1310).